A 344-amino-acid polypeptide reads, in one-letter code: Photosystem II protein D1 (344 aa).

N-acetylthreonine is present on Thr-2. Position 2 is a phosphothreonine (Thr-2). 3 helical membrane passes run 29–46, 118–133, and 142–156; these read YIGW…TATS, HFLL…EWEL, and WIAV…AATA. Position 118 (His-118) interacts with chlorophyll a. Tyr-126 lines the pheophytin a pocket. Positions 170 and 189 each coordinate [CaMn4O5] cluster. Residues 197-218 form a helical membrane-spanning segment; that stretch reads FHMLGVAGVFGGSLFSAMHGSL. His-198 contacts chlorophyll a. Residues His-215 and 264–265 each bind a quinone; that span reads SF. His-215 is a binding site for Fe cation. A Fe cation-binding site is contributed by His-272. Residues 274–288 traverse the membrane as a helical segment; sequence FLAAWPVVCIWFTAL. [CaMn4O5] cluster is bound by residues His-332, Glu-333, Asp-342, and Ala-344.

It belongs to the reaction center PufL/M/PsbA/D family. As to quaternary structure, PSII is composed of 1 copy each of membrane proteins PsbA, PsbB, PsbC, PsbD, PsbE, PsbF, PsbH, PsbI, PsbJ, PsbK, PsbL, PsbM, PsbT, PsbX, PsbY, PsbZ, Psb30/Ycf12, at least 3 peripheral proteins of the oxygen-evolving complex and a large number of cofactors. It forms dimeric complexes. The cofactor is The D1/D2 heterodimer binds P680, chlorophylls that are the primary electron donor of PSII, and subsequent electron acceptors. It shares a non-heme iron and each subunit binds pheophytin, quinone, additional chlorophylls, carotenoids and lipids. D1 provides most of the ligands for the Mn4-Ca-O5 cluster of the oxygen-evolving complex (OEC). There is also a Cl(-1) ion associated with D1 and D2, which is required for oxygen evolution. The PSII complex binds additional chlorophylls, carotenoids and specific lipids.. Post-translationally, tyr-161 forms a radical intermediate that is referred to as redox-active TyrZ, YZ or Y-Z.

The protein localises to the plastid. The protein resides in the chloroplast thylakoid membrane. It carries out the reaction 2 a plastoquinone + 4 hnu + 2 H2O = 2 a plastoquinol + O2. Its function is as follows. Photosystem II (PSII) is a light-driven water:plastoquinone oxidoreductase that uses light energy to abstract electrons from H(2)O, generating O(2) and a proton gradient subsequently used for ATP formation. It consists of a core antenna complex that captures photons, and an electron transfer chain that converts photonic excitation into a charge separation. The D1/D2 (PsbA/PsbD) reaction center heterodimer binds P680, the primary electron donor of PSII as well as several subsequent electron acceptors. The chain is Photosystem II protein D1 from Staurastrum punctulatum (Green alga).